The following is a 215-amino-acid chain: Pyrrolidone-carboxylate peptidase (215 aa).

Residues E80, C143, and H167 contribute to the active site.

It belongs to the peptidase C15 family. Homotetramer.

The protein localises to the cytoplasm. It carries out the reaction Release of an N-terminal pyroglutamyl group from a polypeptide, the second amino acid generally not being Pro.. Functionally, removes 5-oxoproline from various penultimate amino acid residues except L-proline. This Bacillus cytotoxicus (strain DSM 22905 / CIP 110041 / 391-98 / NVH 391-98) protein is Pyrrolidone-carboxylate peptidase.